We begin with the raw amino-acid sequence, 74 residues long: MKPNIHPEYVTTEVTCSCGNTFTTRSTAKGGSIHVETCSACHPFYTGKQRVLDTAGRVAKFQQKYAKVQAKKGK.

The Zn(2+) site is built by C16, C18, C38, and C41.

This sequence belongs to the bacterial ribosomal protein bL31 family. Type A subfamily. As to quaternary structure, part of the 50S ribosomal subunit. Requires Zn(2+) as cofactor.

Its function is as follows. Binds the 23S rRNA. The protein is Large ribosomal subunit protein bL31 of Salinispora arenicola (strain CNS-205).